The primary structure comprises 305 residues: MEIKDGFIAINKEKGFTSHDCVKQIRKLLGIKKVGHTGTLDPDVTGTLPIAIGSATRFIQYLPQGKTYIGQIQLGIRTKTDDMQGEILNKKDWPVLSHKQLDKYLNNFRGIIQQVPPIVSSVHVNGERAYKKAFKNEEFELKPKEVEIEELVLNKWDQINGILEIKVSCSSGTYIRSIARDLGGSLDSEGCLLKLKRISACGFHEKNSIKISDLSDNNDKNAPFIIPTISALDHISTLVLANQEEINFWQTGRIIKFDANNFVKSRSFDYKKPIKIIDPNKILLGIGFINEEKTILHPKLVLNAK.

Catalysis depends on D41, which acts as the Nucleophile.

Belongs to the pseudouridine synthase TruB family. Type 1 subfamily.

The catalysed reaction is uridine(55) in tRNA = pseudouridine(55) in tRNA. In terms of biological role, responsible for synthesis of pseudouridine from uracil-55 in the psi GC loop of transfer RNAs. This Prochlorococcus marinus subsp. pastoris (strain CCMP1986 / NIES-2087 / MED4) protein is tRNA pseudouridine synthase B.